We begin with the raw amino-acid sequence, 365 residues long: Methionine import ATP-binding protein MetN (365 aa).

Positions 17-256 (IVFEHVTKEF…PQSETTQRFL (240 aa)) constitute an ABC transporter domain. An ATP-binding site is contributed by 53–60 (GHSGAGKS). The segment at 346–365 (SNSAAPTTSATVPTPTEEAH) is disordered.

This sequence belongs to the ABC transporter superfamily. Methionine importer (TC 3.A.1.24) family. In terms of assembly, the complex is composed of two ATP-binding proteins (MetN), two transmembrane proteins (MetI) and a solute-binding protein (MetQ).

The protein resides in the cell membrane. It catalyses the reaction L-methionine(out) + ATP + H2O = L-methionine(in) + ADP + phosphate + H(+). The catalysed reaction is D-methionine(out) + ATP + H2O = D-methionine(in) + ADP + phosphate + H(+). In terms of biological role, part of the ABC transporter complex MetNIQ involved in methionine import. Responsible for energy coupling to the transport system. In Cutibacterium acnes (strain DSM 16379 / KPA171202) (Propionibacterium acnes), this protein is Methionine import ATP-binding protein MetN.